We begin with the raw amino-acid sequence, 547 residues long: Nitrosoguanidine resistance protein SNG1 (547 aa).

Residues 35–86 (NQRFAEGSGHSSDLAKSLEDYRPPDEKPSSLSSVGEGGANEEEKGGNDGGPL) form a disordered region. Residues 50–62 (KSLEDYRPPDEKP) are compositionally biased toward basic and acidic residues. The residue at position 91 (threonine 91) is a Phosphothreonine. Helical transmembrane passes span 109-129 (FVLN…IYWG), 159-179 (ISAI…IYNA), 318-338 (ILMA…VLQL), 363-383 (LISW…SAIF), 394-414 (GGFV…GGAN), 418-438 (LSLV…TWII), 457-477 (YGYI…FLNL), and 488-508 (ILVA…KFAG). A compositionally biased stretch (low complexity) spans 526–536 (ATQRASRPAEA). The segment at 526-547 (ATQRASRPAEANTDKNNNPPGN) is disordered.

The protein to yeast YJR015W.

It is found in the membrane. In terms of biological role, may function as a N-methyl-N'nitro-N-nitrosoguanidine (MNNG) export permease. This is Nitrosoguanidine resistance protein SNG1 (SNG1) from Saccharomyces cerevisiae (strain ATCC 204508 / S288c) (Baker's yeast).